The sequence spans 37 residues: Calcitonin gene-related peptide 1 (37 aa).

Cysteine 2 and cysteine 7 form a disulfide bridge. A Phenylalanine amide modification is found at phenylalanine 37.

This sequence belongs to the calcitonin family.

The protein resides in the secreted. In terms of biological role, CGRP1/CALCA is a peptide hormone that induces vasodilation mediated by the CALCRL-RAMP1 receptor complex. Dilates a variety of vessels including the coronary, cerebral and systemic vasculature. Its abundance in the CNS also points toward a neurotransmitter or neuromodulator role. It also elevates platelet cAMP. CGRP1 can also bind and activate CALCR-RAMP1 (AMYR1) receptor complex. The protein is Calcitonin gene-related peptide 1 (CALCA) of Sus scrofa (Pig).